The sequence spans 214 residues: Thymidylate kinase (214 aa).

Residue 12–19 (GGEGAGKS) participates in ATP binding.

Belongs to the thymidylate kinase family.

The catalysed reaction is dTMP + ATP = dTDP + ADP. Phosphorylation of dTMP to form dTDP in both de novo and salvage pathways of dTTP synthesis. The polypeptide is Thymidylate kinase (Gluconobacter oxydans (strain 621H) (Gluconobacter suboxydans)).